We begin with the raw amino-acid sequence, 130 residues long: Small ribosomal subunit protein uS9 (130 aa).

The disordered stretch occupies residues 99-130; sequence KSAGMLTRDPRMKERKKPGLKKARKASQFSKR. Over residues 111–130 the composition is skewed to basic residues; the sequence is KERKKPGLKKARKASQFSKR.

It belongs to the universal ribosomal protein uS9 family.

The protein is Small ribosomal subunit protein uS9 of Latilactobacillus sakei subsp. sakei (strain 23K) (Lactobacillus sakei subsp. sakei).